Here is a 189-residue protein sequence, read N- to C-terminus: Putative L,D-transpeptidase in ATP synthase subunits region ORF 5 (189 aa).

Positions 1–35 (MTDTLNRRAAMALGLASAAGAALATPALSQDAAPA) form a signal peptide, tat-type signal. A L,D-TPase catalytic domain is found at 59–189 (PMLVADTFSR…CPVGTRVRVI (131 aa)). Catalysis depends on His-149, which acts as the Proton donor/acceptor. Catalysis depends on Cys-165, which acts as the Nucleophile.

This sequence belongs to the YkuD family. Predicted to be exported by the Tat system. The position of the signal peptide cleavage has not been experimentally proven.

It participates in cell wall biogenesis; peptidoglycan biosynthesis. In Fuscovulum blasticum (Rhodobacter blasticus), this protein is Putative L,D-transpeptidase in ATP synthase subunits region ORF 5.